A 170-amino-acid chain; its full sequence is Adenine phosphoribosyltransferase (170 aa).

This sequence belongs to the purine/pyrimidine phosphoribosyltransferase family. Homodimer.

It localises to the cytoplasm. It catalyses the reaction AMP + diphosphate = 5-phospho-alpha-D-ribose 1-diphosphate + adenine. It functions in the pathway purine metabolism; AMP biosynthesis via salvage pathway; AMP from adenine: step 1/1. Catalyzes a salvage reaction resulting in the formation of AMP, that is energically less costly than de novo synthesis. The sequence is that of Adenine phosphoribosyltransferase from Bacillus velezensis (strain DSM 23117 / BGSC 10A6 / LMG 26770 / FZB42) (Bacillus amyloliquefaciens subsp. plantarum).